Consider the following 511-residue polypeptide: Zinc finger and BTB domain-containing protein 45 (511 aa).

A BTB domain is found at 33-96 (CDVTVRIREA…LYSGSLVVAQ (64 aa)). Residues 159–168 (ARPPGHPGAA) show a composition bias toward low complexity. Disordered regions lie at residues 159-241 (ARPP…PDCA) and 294-403 (EDGA…PPTY). The segment covering 206–224 (RGDEDDEESDDETDGEDGE) has biased composition (acidic residues). The span at 339–360 (PGPPAPPPSAPSGPAPAPPPAF) shows a compositional bias: pro residues. The segment covering 378–397 (PAPSAAPTTAPSGTPARTPG) has biased composition (low complexity). 4 consecutive C2H2-type zinc fingers follow at residues 403 to 425 (YECS…MFIH), 431 to 453 (HQCA…MVTH), 459 to 481 (FQCA…MRTH), and 486 to 508 (APCP…LAAH).

It belongs to the krueppel C2H2-type zinc-finger protein family.

It localises to the nucleus. Functionally, may be involved in transcriptional regulation. In the central nervous system, may play a role in glial cell differentiation. The polypeptide is Zinc finger and BTB domain-containing protein 45 (ZBTB45) (Homo sapiens (Human)).